A 276-amino-acid chain; its full sequence is NH(3)-dependent NAD(+) synthetase (276 aa).

43–50 is a binding site for ATP; sequence GISGGVDS. Asp-49 serves as a coordination point for Mg(2+). Arg-146 lines the deamido-NAD(+) pocket. Thr-166 contacts ATP. Glu-171 is a binding site for Mg(2+). 2 residues coordinate deamido-NAD(+): Lys-179 and Asp-186. Residues Lys-195 and Thr-217 each coordinate ATP. Residue 266 to 267 participates in deamido-NAD(+) binding; that stretch reads HK.

The protein belongs to the NAD synthetase family. As to quaternary structure, homodimer.

It carries out the reaction deamido-NAD(+) + NH4(+) + ATP = AMP + diphosphate + NAD(+) + H(+). It participates in cofactor biosynthesis; NAD(+) biosynthesis; NAD(+) from deamido-NAD(+) (ammonia route): step 1/1. Catalyzes the ATP-dependent amidation of deamido-NAD to form NAD. Uses ammonia as a nitrogen source. This is NH(3)-dependent NAD(+) synthetase from Shewanella baltica (strain OS185).